Reading from the N-terminus, the 181-residue chain is Glutamyl-tRNA(Gln) amidotransferase subunit C, chloroplastic/mitochondrial (181 aa).

This sequence belongs to the GatC family. As to quaternary structure, subunit of the heterotrimeric GatCAB amidotransferase (AdT) complex, composed of A, B and C subunits.

The protein resides in the mitochondrion. The protein localises to the plastid. Its subcellular location is the chloroplast. It catalyses the reaction L-glutamyl-tRNA(Gln) + L-glutamine + ATP + H2O = L-glutaminyl-tRNA(Gln) + L-glutamate + ADP + phosphate + H(+). Its function is as follows. Allows the formation of correctly charged Gln-tRNA(Gln) through the transamidation of misacylated Glu-tRNA(Gln) in chloroplasts and mitochondria. The reaction takes place in the presence of glutamine and ATP through an activated gamma-phospho-Glu-tRNA(Gln). This chain is Glutamyl-tRNA(Gln) amidotransferase subunit C, chloroplastic/mitochondrial, found in Picea sitchensis (Sitka spruce).